We begin with the raw amino-acid sequence, 347 residues long: MKPPILIIIMFTVISGTIMVLMSSHWLMIWIGFEMNMLAIIPILMKKYNPRAVEAATKYFLTQATASMLLMLGIIMNLLLTGQWAVLSTLNPIVSNTMTVALAMKLGLSPFHFWVPEVTQGIPLLSGMVLLTWQKIAPLSILYQMAPSMNPHLLMTMALMSVLVGGWGGLNQTQLRKILAYSSIAHMGWMIAVMTYSPTLMLLNLSIYITMTLGTFMLFMFNSSTTTLSLSLTWNKLPLITSLILIIMLSLGGLPPLSGFIPKWMIIHELTKNNMIITTMLMTITALLNLYFYMRLTYATALTMFPSTNNMKMKWQFESTKNMTMLPPLIVISTMLLPLTPMMSTLF.

9 helical membrane-spanning segments follow: residues 3–23 (PPILIIIMFTVISGTIMVLMS), 25–45 (HWLMIWIGFEMNMLAIIPILM), 67–87 (SMLLMLGIIMNLLLTGQWAVL), 150–170 (NPHLLMTMALMSVLVGGWGGL), 178–198 (ILAYSSIAHMGWMIAVMTYSP), 201–221 (MLLNLSIYITMTLGTFMLFMF), 237–257 (LPLITSLILIIMLSLGGLPPL), 274–294 (NMIITTMLMTITALLNLYFYM), and 323–343 (MTMLPPLIVISTMLLPLTPMM).

Belongs to the complex I subunit 2 family. In terms of assembly, core subunit of respiratory chain NADH dehydrogenase (Complex I) which is composed of 45 different subunits. Interacts with TMEM242.

It localises to the mitochondrion inner membrane. It carries out the reaction a ubiquinone + NADH + 5 H(+)(in) = a ubiquinol + NAD(+) + 4 H(+)(out). Its function is as follows. Core subunit of the mitochondrial membrane respiratory chain NADH dehydrogenase (Complex I) which catalyzes electron transfer from NADH through the respiratory chain, using ubiquinone as an electron acceptor. Essential for the catalytic activity and assembly of complex I. This is NADH-ubiquinone oxidoreductase chain 2 from Mustela kathiah (Yellow-bellied weasel).